The following is a 310-amino-acid chain: 26S proteasome non-ATPase regulatory subunit 7 homolog B (310 aa).

Methionine 1 is modified (N-acetylmethionine). The 138-residue stretch at 17 to 154 (VIVHPLVLLS…YYAVEEVKEN (138 aa)) folds into the MPN domain.

It belongs to the peptidase M67A family. As to quaternary structure, component of the 19S regulatory particle (RP/PA700) lid subcomplex of the 26S proteasome. The 26S proteasome is composed of a core protease (CP), known as the 20S proteasome, capped at one or both ends by the 19S regulatory particle (RP/PA700). The RP/PA700 complex is composed of at least 17 different subunits in two subcomplexes, the base and the lid, which form the portions proximal and distal to the 20S proteolytic core, respectively.

Functionally, acts as a regulatory subunit of the 26S proteasome which is involved in the ATP-dependent degradation of ubiquitinated proteins. The sequence is that of 26S proteasome non-ATPase regulatory subunit 7 homolog B (RPN8B) from Arabidopsis thaliana (Mouse-ear cress).